A 218-amino-acid polypeptide reads, in one-letter code: Small ribosomal subunit protein uS3c (218 aa).

The KH type-2 domain occupies 43–118 (IKDYVKKNKK…RLNIAITRIE (76 aa)).

This sequence belongs to the universal ribosomal protein uS3 family. Part of the 30S ribosomal subunit.

Its subcellular location is the plastid. The protein localises to the chloroplast. The sequence is that of Small ribosomal subunit protein uS3c (rps3) from Phalaenopsis aphrodite subsp. formosana (Moth orchid).